Consider the following 408-residue polypeptide: Aurora kinase A-B (408 aa).

Residues 1–10 (MERAVKENHK) are compositionally biased toward basic and acidic residues. Residues 1–128 (MERAVKENHK…QGKTLAVPKE (128 aa)) are disordered. Positions 85-110 (GHQTSKPQGPNENRNPQQTSHSSTPN) are enriched in polar residues. The Protein kinase domain occupies 140–390 (FEIGRPLGKG…LKGVLEHPWI (251 aa)). ATP-binding positions include lysine 150, lysine 169, and 217 to 220 (LDYA). Aspartate 263 acts as the Proton acceptor in catalysis. Residue aspartate 281 participates in ATP binding. Positions 287-300 (HAPSSRRTTLCGTL) are activation segment.

Belongs to the protein kinase superfamily. Ser/Thr protein kinase family. Aurora subfamily. Interacts with kif2c and kif11. In terms of processing, phosphorylated. Autophosphorylated on a serine residue.

It localises to the cytoplasm. The protein localises to the cytoskeleton. The protein resides in the spindle pole. It is found in the microtubule organizing center. Its subcellular location is the centrosome. It carries out the reaction L-seryl-[protein] + ATP = O-phospho-L-seryl-[protein] + ADP + H(+). The enzyme catalyses L-threonyl-[protein] + ATP = O-phospho-L-threonyl-[protein] + ADP + H(+). Functionally, mitotic serine/threonine kinases that contributes to the regulation of cell cycle progression. Associates with the centrosome and the spindle microtubules during mitosis and plays a critical role in various mitotic events including the establishment of mitotic spindle, centrosome duplication, centrosome separation as well as maturation, chromosomal alignment, spindle assembly checkpoint, and cytokinesis. Phosphorylates numerous target proteins. Important for microtubule formation and/or stabilization. This is Aurora kinase A-B (aurka-b) from Xenopus laevis (African clawed frog).